Consider the following 839-residue polypeptide: Taste receptor type 1 member 2 (839 aa).

An N-terminal signal peptide occupies residues 1-19 (MGPRAKTISSLFFLLWVLA). Over 20-566 (EPAENSDFYL…VFLEWHEAPT (547 aa)) the chain is Extracellular. N-linked (GlcNAc...) asparagine glycans are attached at residues N84, N248, N292, N312, N368, N428, N487, and N527. Residues 567–587 (IAVALLAALGFLSTLAILVIF) traverse the membrane as a helical segment. Residues 588-602 (WRHFQTPIVRSAGGP) are Cytoplasmic-facing. A helical membrane pass occupies residues 603-623 (MCFLMLTLLLVAYMVVPVYVG). Residues 624 to 635 (PPKVSTCLCRQA) lie on the Extracellular side of the membrane. Residues 636–656 (LFPLCFTICISCIAVRSFQIV) traverse the membrane as a helical segment. Over 657 to 681 (CAFKMASRFPRAYSYWVRYQGPYVS) the chain is Cytoplasmic. A helical transmembrane segment spans residues 682–702 (MAFITVLKMVIVVIGMLATGL). At 703–727 (SPTTRTDPDDPKITIVSCNPNYRNS) the chain is on the extracellular side. Residues 728 to 748 (LLFNTSLDLLLSVVGFSFAYM) form a helical membrane-spanning segment. At 749–760 (GKELPTNYNEAK) the chain is on the cytoplasmic side. A helical transmembrane segment spans residues 761 to 781 (FITLSMTFYFTSSVSLCTFMS). Residues 782 to 784 (AYS) are Extracellular-facing. The helical transmembrane segment at 785–805 (GVLVTIVDLLVTVLNLLAISL) threads the bilayer. The Cytoplasmic segment spans residues 806 to 839 (GYFGPKCYMILFYPERNTPAYFNSMIQGYTMRRD).

Belongs to the G-protein coupled receptor 3 family. TAS1R subfamily. As to quaternary structure, forms heterodimers with TAS1R3.

It is found in the cell membrane. Its function is as follows. Putative taste receptor. TAS1R2/TAS1R3 recognizes diverse natural and synthetic sweeteners. The polypeptide is Taste receptor type 1 member 2 (TAS1R2) (Homo sapiens (Human)).